The primary structure comprises 9702 residues: Nonribosomal peptide synthetase ungA (9702 aa).

Residues 248 to 647 form an adenylation 1 region; sequence EQAQLRPHAP…ARKDTQVKIR (400 aa). The 78-residue stretch at 775–852 folds into the Carrier 1 domain; sequence APQTEMEYRL…MARAAQEKQT (78 aa). Ser-812 carries the O-(pantetheine 4'-phosphoryl)serine modification. Residues 891–1288 form a condensation 1 region; the sequence is DILPCTPLQE…EAVLRHVCSQ (398 aa). Positions 1330–1730 are adenylation 2; the sequence is QRTQQQPDAP…GRKDTQVKIR (401 aa). Residues 1857-1933 form the Carrier 2 domain; that stretch reads LPQSPMEKSL…RLARREIQTD (77 aa). O-(pantetheine 4'-phosphoryl)serine is present on Ser-1894. The tract at residues 1946–2374 is epimerization 1; the sequence is PFALSPIQQF…ERALEGTAVQ (429 aa). A condensation 2 region spans residues 2414-2842; that stretch reads EDIYPCSPLQ…LDTAILSPQD (429 aa). The tract at residues 2868-3267 is adenylation 3; it reads QVERQPDALA…GRKDTQVKIR (400 aa). The Carrier 3 domain occupies 3397-3473; sequence APTTEMERHL…EMSQVAKLGS (77 aa). An O-(pantetheine 4'-phosphoryl)serine modification is found at Ser-3434. The tract at residues 3512–3920 is condensation 3; the sequence is EDVFPCTPLQ…LLCDASHHQS (409 aa). The interval 3957–4361 is adenylation 4; that stretch reads KQTQRRSAAQ…GRKDAQVKIR (405 aa). In terms of domain architecture, Carrier 4 spans 4491-4568; sequence PPTTDLERQI…LALSVSAAVD (78 aa). O-(pantetheine 4'-phosphoryl)serine is present on Ser-4528. Positions 4583-5013 are epimerization 2; the sequence is ALSPIQQMFA…QAAAQALPLL (431 aa). The condensation 4 stretch occupies residues 5049 to 5474; the sequence is VEDIYPCSPL…ANIISHQDLE (426 aa). The adenylation 5 stretch occupies residues 5496-5899; sequence MQQAESQPGA…GRKDNQVKIH (404 aa). The Carrier 5 domain maps to 6033 to 6110; that stretch reads TASSPEELEL…LVSHAQGNTA (78 aa). Position 6070 is an O-(pantetheine 4'-phosphoryl)serine (Ser-6070). The segment at 6127-6551 is epimerization 3; sequence ELSPIQQLFF…CKSSLEAAAA (425 aa). A condensation 5 region spans residues 6593 to 6935; it reads VEDIYPCAPI…TGISVQGGAA (343 aa). Residues 7047 to 7447 are adenylation 6; the sequence is KRPDAPAIDA…GRRDNQVKVR (401 aa). One can recognise a Carrier 6 domain in the interval 7575–7655; sequence GPQTEVERLL…RSARTVQGHV (81 aa). The residue at position 7613 (Ser-7613) is an O-(pantetheine 4'-phosphoryl)serine. The epimerization 4 stretch occupies residues 7670–8106; that stretch reads DLAPVQQMFA…LVTASELLMQ (437 aa). The interval 8144–8588 is condensation 6; sequence VEDIYPCSPI…EVDLSTDHDQ (445 aa). Positions 8612–9025 are adenylation 7; that stretch reads NTVQKQPHST…GRKDSQVKIR (414 aa). A Carrier 7 domain is found at 9158-9236; it reads SPTAPMERRL…LALLVREGDA (79 aa). The residue at position 9196 (Ser-9196) is an O-(pantetheine 4'-phosphoryl)serine. Residues 9282 to 9629 are condensation 7; it reads DVYPTTDLQN…DNLEHDPGTA (348 aa).

Belongs to the NRP synthetase family.

Its pathway is secondary metabolite biosynthesis. Functionally, nonribosomal peptide synthetase; part of the gene cluster that mediates the biosynthesis of the unguisins, gamma-aminobutyric acid (GABA)-containing fungal cyclic heptapeptides with the amino acid sequence cyclo-(D-Ala1-D-Val2-L-Phe3-D-Val4-D-Ala5-D-Trp6-GABA7) for unguisin A and cyclo-(D-Ala1-D-Val2-L-Leu3-D-Val4-D-Ala5-D-Trp6-GABA7) for unguisin B. UngA is the main enzyme within the cluster which condenses the 7 residues using its respective 7 modules. The terminal condensation domain (Ct) is involved in cyclization with D-alanine and thereby releasing of unguisins A and B. The alanine racemase ungC provides D-alanine, which is then accepted by the first adenylation domain of ungA. Finally, the hydrolase ungD catalyzes the hydrolysis between the D-tryptophan and GABA residues of unguisins A and B to produce the corresponding linear peptides. The polypeptide is Nonribosomal peptide synthetase ungA (Aspergillus violaceofuscus (strain CBS 115571)).